A 199-amino-acid polypeptide reads, in one-letter code: Glycerol-3-phosphate acyltransferase (199 aa).

The next 5 helical transmembrane spans lie at 5-25, 54-74, 82-102, 114-134, and 154-174; these read AYLL…IIFC, AAIG…LIAF, AIGL…FFQF, VFFS…LIVF, and YIWC…CLLI.

The protein belongs to the PlsY family. In terms of assembly, probably interacts with PlsX.

The protein resides in the cell inner membrane. The enzyme catalyses an acyl phosphate + sn-glycerol 3-phosphate = a 1-acyl-sn-glycero-3-phosphate + phosphate. It functions in the pathway lipid metabolism; phospholipid metabolism. Catalyzes the transfer of an acyl group from acyl-phosphate (acyl-PO(4)) to glycerol-3-phosphate (G3P) to form lysophosphatidic acid (LPA). This enzyme utilizes acyl-phosphate as fatty acyl donor, but not acyl-CoA or acyl-ACP. This chain is Glycerol-3-phosphate acyltransferase, found in Haemophilus ducreyi (strain 35000HP / ATCC 700724).